The sequence spans 361 residues: Phospho-N-acetylmuramoyl-pentapeptide-transferase (361 aa).

The next 10 helical transmembrane spans lie at 27-47, 72-92, 99-119, 135-155, 169-189, 200-220, 240-260, 264-284, 289-309, and 338-358; these read GALF…ISLL, TPTM…LLWA, VWVT…DDYL, LALE…YSPA, ALLN…VGAG, GLAI…AYLV, LAVV…FNAP, IFMG…IAVA, IVLA…IIQV, and QVVI…LATL.

This sequence belongs to the glycosyltransferase 4 family. MraY subfamily. It depends on Mg(2+) as a cofactor.

The protein resides in the cell inner membrane. It carries out the reaction UDP-N-acetyl-alpha-D-muramoyl-L-alanyl-gamma-D-glutamyl-meso-2,6-diaminopimeloyl-D-alanyl-D-alanine + di-trans,octa-cis-undecaprenyl phosphate = di-trans,octa-cis-undecaprenyl diphospho-N-acetyl-alpha-D-muramoyl-L-alanyl-D-glutamyl-meso-2,6-diaminopimeloyl-D-alanyl-D-alanine + UMP. Its pathway is cell wall biogenesis; peptidoglycan biosynthesis. Catalyzes the initial step of the lipid cycle reactions in the biosynthesis of the cell wall peptidoglycan: transfers peptidoglycan precursor phospho-MurNAc-pentapeptide from UDP-MurNAc-pentapeptide onto the lipid carrier undecaprenyl phosphate, yielding undecaprenyl-pyrophosphoryl-MurNAc-pentapeptide, known as lipid I. The protein is Phospho-N-acetylmuramoyl-pentapeptide-transferase of Methylobacterium radiotolerans (strain ATCC 27329 / DSM 1819 / JCM 2831 / NBRC 15690 / NCIMB 10815 / 0-1).